The sequence spans 462 residues: Cysteine--tRNA ligase (462 aa).

Cys30 provides a ligand contact to Zn(2+). A 'HIGH' region motif is present at residues 32–42 (MTVYDYCHVGH). The Zn(2+) site is built by Cys214, His239, and Glu243. The short motif at 271–275 (KMSKS) is the 'KMSKS' region element. Lys274 is a binding site for ATP.

It belongs to the class-I aminoacyl-tRNA synthetase family. In terms of assembly, monomer. The cofactor is Zn(2+).

Its subcellular location is the cytoplasm. It carries out the reaction tRNA(Cys) + L-cysteine + ATP = L-cysteinyl-tRNA(Cys) + AMP + diphosphate. The polypeptide is Cysteine--tRNA ligase (Cupriavidus necator (strain ATCC 17699 / DSM 428 / KCTC 22496 / NCIMB 10442 / H16 / Stanier 337) (Ralstonia eutropha)).